The following is a 72-amino-acid chain: Translation initiation factor IF-1 (72 aa).

The region spanning 1–72 (MSKQTAIEQD…TKGRISFRYK (72 aa)) is the S1-like domain.

Belongs to the IF-1 family. Component of the 30S ribosomal translation pre-initiation complex which assembles on the 30S ribosome in the order IF-2 and IF-3, IF-1 and N-formylmethionyl-tRNA(fMet); mRNA recruitment can occur at any time during PIC assembly.

It is found in the cytoplasm. One of the essential components for the initiation of protein synthesis. Stabilizes the binding of IF-2 and IF-3 on the 30S subunit to which N-formylmethionyl-tRNA(fMet) subsequently binds. Helps modulate mRNA selection, yielding the 30S pre-initiation complex (PIC). Upon addition of the 50S ribosomal subunit IF-1, IF-2 and IF-3 are released leaving the mature 70S translation initiation complex. In Porphyromonas gingivalis (strain ATCC BAA-308 / W83), this protein is Translation initiation factor IF-1.